Consider the following 844-residue polypeptide: DNA mismatch repair protein MutS (844 aa).

610 to 617 lines the ATP pocket; that stretch reads GPNMGGKS.

The protein belongs to the DNA mismatch repair MutS family.

This protein is involved in the repair of mismatches in DNA. It is possible that it carries out the mismatch recognition step. This protein has a weak ATPase activity. This chain is DNA mismatch repair protein MutS, found in Francisella tularensis subsp. novicida (strain U112).